Here is a 2004-residue protein sequence, read N- to C-terminus: Histone acetyltransferase KAT6A (2004 aa).

Positions 1-77 (MVKLANPLYT…LNSYKDPDNP (77 aa)) constitute an SAMD1-like winged helix (WH) domain. The interval 1–144 (MVKLANPLYT…FGGSAASGFH (144 aa)) is required for activation of RUNX1-1. Residues 52 to 166 (ELSVKDGTIL…HGRLLKDGPL (115 aa)) are required for nuclear localization. Residues 95–171 (QNVDWNKLIK…KDGPLYRLNT (77 aa)) enclose the H15 domain. An interaction with PML region spans residues 144-664 (HQQLRLAIKR…RKGYGRFLID (521 aa)). K172 carries the N6-acetyllysine modification. PHD-type zinc fingers lie at residues 206–265 (IPIC…CKTC) and 259–313 (CIEC…CRPR). Residues 312–664 (PRKKGRKLLQ…RKGYGRFLID (353 aa)) are interaction with RUNX1-1. The tract at residues 334-375 (PIGRPKNRLKKQNTVSKGPFSKVRTGPGRGRKRKITLSSQSA) is disordered. N6-acetyllysine occurs at positions 350 and 355. T369 carries the phosphothreonine; by PKB/AKT1 modification. At S420 the chain carries Phosphoserine. Residues 441 to 464 (KRGNRKSSTSDWPTDNQDGWDGKQ) are disordered. Positions 446-457 (KSSTSDWPTDNQ) are enriched in polar residues. At S473 the chain carries Phosphoserine. A catalytic region spans residues 488-778 (IQEQALQKVG…VDPECLRWTP (291 aa)). One can recognise an MYST-type HAT domain in the interval 504 to 778 (PQVRCPSVIE…VDPECLRWTP (275 aa)). The tract at residues 507–810 (RCPSVIEFGK…EPQCQERELE (304 aa)) is mediates interaction with BRPF1, required for histone H3 acetyltransferase activity. The segment at 537–562 (LYLCEFCLKYMKSRTILQQHMKKCGW) adopts a C2HC MYST-type zinc-finger fold. The residue at position 604 (K604) is an N6-acetyllysine; by autocatalysis. Acetyl-CoA is bound by residues 645–649 (SCIMI) and 654–660 (QRKGYGR). The active-site Proton donor/acceptor is E680. Residue S684 participates in acetyl-CoA binding. 3 disordered regions span residues 785–1445 (VVSE…AYQD), 1461–1621 (QADE…MMQQ), and 1637–1721 (SCVV…MEIP). 2 positions are modified to phosphoserine: S787 and S812. Acidic residues predominate over residues 787–803 (SEEEEEEAEEGENEEPQ). Position 815 is an N6-acetyllysine (K815). Basic and acidic residues predominate over residues 817–836 (VSHENKEQDSYSVESEKKPE). K834 participates in a covalent cross-link: Glycyl lysine isopeptide (Lys-Gly) (interchain with G-Cter in SUMO2). Residues 864–873 (RRGRWGRKNR) show a composition bias toward basic residues. Residues 874-888 (KTQERFGDKDSKLLL) show a composition bias toward basic and acidic residues. Phosphotyrosine is present on Y899. Composition is skewed to basic and acidic residues over residues 931–942 (GKPDLPKRRLSE) and 953–980 (KSPE…DRAV). Phosphoserine is present on residues S941, S954, and S974. At K1007 the chain carries N6-acetyllysine. Basic residues predominate over residues 1009–1030 (TLKRKKPFLHRRRRVRKRKHHN). Positions 1031 to 1042 (SSVVTETISETT) are enriched in low complexity. Composition is skewed to acidic residues over residues 1043–1053 (EVLDEPFEDSD) and 1065–1078 (FEID…DENE). 3 positions are modified to phosphoserine: S1089, S1090, and S1113. Residues 1107-1118 (EEEDEESDDADD) are compositionally biased toward acidic residues. The span at 1146–1172 (LKKKKGWPKGKSRKPIHWKKRPGRKPG) shows a compositional bias: basic residues. Over residues 1203–1223 (KIQESEETVEPKEDMPLPEER) the composition is skewed to basic and acidic residues. The span at 1224–1245 (KEEEEMQAEAEEAEEGEEEDAA) shows a compositional bias: acidic residues. Positions 1246–1262 (SSEVPAASPADSSNSPE) are enriched in low complexity. Residues 1275 to 1287 (EKPRVSEEQRQSE) show a composition bias toward basic and acidic residues. Residues 1288–1305 (EEQQELEEPEPEEEEDAA) are compositionally biased toward acidic residues. 3 stretches are compositionally biased toward basic and acidic residues: residues 1323-1345 (HLES…KEEP), 1358-1367 (KSREKIKDKE), and 1398-1420 (EDSH…HSEL). A Glycyl lysine isopeptide (Lys-Gly) (interchain with G-Cter in SUMO2) cross-link involves residue K1342. Low complexity predominate over residues 1481–1503 (SPISSVQSHPSQSVRSVSSPNVP). A compositionally biased stretch (polar residues) spans 1508 to 1529 (GYTQISPEQGSLSAPSMQNMET). An interaction with RUNX1-2 region spans residues 1517–1642 (GSLSAPSMQN…KSPQSCVVER (126 aa)). Residues 1517 to 1741 (GSLSAPSMQN…YERIPGDFGA (225 aa)) form an interaction with PML region. The segment covering 1534–1548 (DVPSVSDHSQQVVDS) has biased composition (low complexity). Residues 1556-1573 (IESTTENYENPSSYDSTM) show a composition bias toward polar residues. Residues 1574–1621 (GGSICGNSSSQSSCSYGGLSSSSSLTQSSCVVTQQMASMGSSCSMMQQ) show a composition bias toward low complexity. The span at 1650 to 1699 (QPPPPPPQQPQPPPPQPQPAPQPPPPQQQPQQQPQPQPQQPPPPPPPQQQ) shows a compositional bias: pro residues. Residues 1702-1712 (LSQCSMNNSFT) are compositionally biased toward polar residues. Residues 1913-1948 (SMNMNTLNAMNSYRMTQPMMNSSYHSNPAYMNQTAQ) are required for activation of RUNX1-2.

It belongs to the MYST (SAS/MOZ) family. As to quaternary structure, component of the MOZ/MORF complex composed at least of ING5, KAT6A, KAT6B, MEAF6 and one of BRPF1, BRD1/BRPF2 and BRPF3. Interacts with RUNX1; phosphorylation of RUNX1 enhances the interaction. Interacts with RUNX2. Interacts with p53/TP53. Interacts with PML (isoform PML-4) and this interaction positively regulates its acetylation activity towards p53/TP53. Post-translationally, autoacetylation at Lys-604 is required for proper function. Autoacetylated. In terms of processing, phosphorylation at Thr-369 by PKB/AKT1 inhibits its interaction with PML and negatively regulates its acetylation activity towards p53/TP53.

Its subcellular location is the nucleus. It is found in the nucleolus. The protein resides in the nucleoplasm. The protein localises to the PML body. The catalysed reaction is L-lysyl-[protein] + acetyl-CoA = N(6)-acetyl-L-lysyl-[protein] + CoA + H(+). Histone acetyltransferase that acetylates lysine residues in histone H3 and histone H4 (in vitro). Component of the MOZ/MORF complex which has a histone H3 acetyltransferase activity. May act as a transcriptional coactivator for RUNX1 and RUNX2. Acetylates p53/TP53 at 'Lys-120' and 'Lys-382' and controls its transcriptional activity via association with PML. The polypeptide is Histone acetyltransferase KAT6A (KAT6A) (Homo sapiens (Human)).